We begin with the raw amino-acid sequence, 502 residues long: UDP-glucuronosyltransferase 2C1 (502 aa).

N-linked (GlcNAc...) asparagine glycosylation is found at Asn-177 and Asn-288. A helical membrane pass occupies residues 466–481 (VVVFLLTCVATIIFLA).

Belongs to the UDP-glycosyltransferase family.

It is found in the microsome membrane. It localises to the endoplasmic reticulum membrane. The enzyme catalyses glucuronate acceptor + UDP-alpha-D-glucuronate = acceptor beta-D-glucuronoside + UDP + H(+). In terms of biological role, UDPGT is of major importance in the conjugation and subsequent elimination of potentially toxic xenobiotics and endogenous compounds. In Oryctolagus cuniculus (Rabbit), this protein is UDP-glucuronosyltransferase 2C1 (UGT2C1).